Consider the following 1885-residue polypeptide: MATRGNVPAHMQASLPALPAHLQSDTHITAHLASRFHVSLPTARLSSQGLICLNTFTSSTRGPNGDKEGSAMGEPEDLARRAWARLGNRAEDQAFGFFGESGSGKTTVRSHLLSSFLSFSSTPLSSKLSLAAFVFDTLTTTKTTTTQTASKAGLFYELQYDASSNNPTLIGGKLLDHRFERSRISHVPTGERSFHVLYYLLAGTSAAEKSHLGLDGHVNITTAGTGLSRSASVSHKRWRYLGHPTQMKVGINDAEGFQHFKNALRKLEFPRTEIAEICQVLAAILHIGQLEFGTGQATLTAAEESGGYSHEGGETVTVVKNRDTLAIVAAFLGLGVQDLEESLRYKTRTIHRERVTVMLDTKGARENADELATTLYSLLVTYIIESINQRVCAAEDSVANTISIVDFPGFADHSSTGSVLDQLLNNAANESLYNTCLHSIFEKTAEMLESEEVSVPATSYFDNSDAVRGLLKHGNGLLAILDDQTRRGRTDVQFLESLRKRFENKNKAITVGSATSTMPGSNFATTNLAASFTVRHYAGEVDYPVHSLVEENGDVVSGDLMNMIKATKSDFVANLFGQEALNTVSHPAEKTAIVQAQVSSKPLRMPSVSRKKHDQLRRMASRRADRSPAPQEEEPLPGTEEAKVRRTKPTATGLTQGAAAQFLSALDNITKSLTAPNVNNYFVFCLKPNDRRIANQFDSKCVRQQVQMFGIAEISQRLRTADFTIFLPFGEFLGLTNADGGVVGSDREKAQLVLDSKHWPPNEARIGNTGVFLSERCWASIALTGSQAAAYFGGDIGSPSRPDTPGHNPFSDSKARLVGSADGTPGSFYGDEAKGGGYFGSRELDAKSDAGASAFHSGDMFRNLETKEELAEKGNKKKVEEVDVVPVSSSRKRWLAIVYFLTWYLPDFAIKWIGGMKRKDVRTAWREKFAINLLIWLSCGLVVFFIIVFPELICPKQNVYSAAELSAHDGKGKHSAYVAIRGQVFDLGAFMPNHYPKIIPQSSLKKYAGVDATGLFPVQVSALCQGKDGRVDPTVQLDYTATNISGTAAVISSTDANRKYHDFRYFTNDSRPDWFYEQMIMLKANYRKGSIGYTPQYVKTLAKKSKSIAILNDRVYDFTTYNEGGRSVRAPPGEEVPSGVDTDFMDSLVVDLFTQRAGHDVTKYWNALPLDPGLRSRMQLCLDNLFFVGVTDTRNSPRCLFARYILLAVSILLCSVIGFKFFAALQFGGKNVPENLDKFVICQVPAYTEDEDSLRRAIDSAARMRYDDKRKLLIVVCDGMIIGQGNDRPTPRIVLDILGVSETVDPEPLSFESLGEGMKQHNMGKVYSGLYEVQGHIVPFMVVVKVGKPSEVSRPGNRGKRDSQMVIMRFLHRVHYNLPMSPLELEMHHQIRNIIGVNPTFYEFMLQIDADTVVAPDSATRMVSAFLRDTRLIGVCGETSLSNAKSSFITMMQVYEYYISHNLTKAFESLFGSVTCVPGCFTMYRIRAAETGKPLFVSKEIIQDYSEIRVDTLHMKNLLHLGEDRYLTTLLLKYHSKYKTKYIFHAHAWTIAPDSWKVFMSQRRRWINSTVHNLIELIPLQQLCGFCCFSMRFVVFLDLLSTVVAPVTVAYIAYLIVLLATESDVVPLTAFILLGAIYGLQAIIFILRRKWEMIGWMIVYILAMPVFSLGLPLYAFWHMDDFSWGNTRLVRGEHGKQILLSDEGKFGPDSIPKKKWEEYQAELWDAQTQRDDARSELSGYSYGTKSYLPTGSVYGGGYNDTQHLMMAPSRSASQLDMHPTPMYGGGGGHNQSRMSLAPSEMLGSQSNLMMPSGRSVADMEMSDLTGLPTDDMLLNEIRDILRTADLMTVTKKGIKQELERRFNVNLDMKRAYIGSATEAILSGQL.

The Myosin motor domain maps to 1 to 789 (MATRGNVPAH…SIALTGSQAA (789 aa)). 99-106 (GESGSGKT) contacts ATP. N-linked (GlcNAc...) asparagine glycans are attached at residues asparagine 219 and asparagine 429. The disordered stretch occupies residues 601 to 649 (KPLRMPSVSRKKHDQLRRMASRRADRSPAPQEEEPLPGTEEAKVRRTKP). Over residues 609–621 (SRKKHDQLRRMAS) the composition is skewed to basic residues. Residues 666–690 (LDNITKSLTAPNVNNYFVFCLKPND) form an actin-binding region. The N-linked (GlcNAc...) asparagine glycan is linked to asparagine 668. Positions 794-817 (GDIGSPSRPDTPGHNPFSDSKARL) are disordered. A run of 2 helical transmembrane segments spans residues 894 to 914 (WLAIVYFLTWYLPDFAIKWIG) and 929 to 949 (FAINLLIWLSCGLVVFFIIVF). The Cytochrome b5 heme-binding domain maps to 957-1016 (QNVYSAAELSAHDGKGKHSAYVAIRGQVFDLGAFMPNHYPKIIPQSSLKKYAGVDATGLF). Asparagine 1043 and asparagine 1068 each carry an N-linked (GlcNAc...) asparagine glycan. The helical transmembrane segment at 1205-1225 (ILLAVSILLCSVIGFKFFAAL) threads the bilayer. N-linked (GlcNAc...) asparagine glycans are attached at residues asparagine 1462 and asparagine 1568. Transmembrane regions (helical) follow at residues 1599–1619 (LLSTVVAPVTVAYIAYLIVLL), 1626–1646 (VPLTAFILLGAIYGLQAIIFI), and 1653–1673 (MIGWMIVYILAMPVFSLGLPL). N-linked (GlcNAc...) asparagine glycosylation is found at asparagine 1759 and asparagine 1790. The 56-residue stretch at 1827–1882 (LPTDDMLLNEIRDILRTADLMTVTKKGIKQELERRFNVNLDMKRAYIGSATEAILS) folds into the DEK-C domain.

In the N-terminal section; belongs to the TRAFAC class myosin-kinesin ATPase superfamily. Myosin family. This sequence in the C-terminal section; belongs to the chitin synthase family. Class V subfamily. Post-translationally, maximal activity requires trypsin activation, suggesting a zymogenic nature.

The protein resides in the cell membrane. It is found in the membrane. It catalyses the reaction [(1-&gt;4)-N-acetyl-beta-D-glucosaminyl](n) + UDP-N-acetyl-alpha-D-glucosamine = [(1-&gt;4)-N-acetyl-beta-D-glucosaminyl](n+1) + UDP + H(+). Functionally, polymerizes chitin, a structural polymer of the cell wall and septum, by transferring the sugar moiety of UDP-GlcNAc to the non-reducing end of the growing chitin polymer. CHS5 is required for the sustained growth at 37 degrees Celsius and is of critical importance for virulence. Especially important at infection temperatures for maintaining the cell wall integrity of developing yeast buds, elongating tips of hyphae, and random sites of expansion in sclerotic forms. The polypeptide is Chitin synthase 5 (Exophiala dermatitidis (Black yeast-like fungus)).